The sequence spans 261 residues: Glucose 1-dehydrogenase 4 (261 aa).

11–35 is a binding site for NAD(+); it reads VITGGSTGLGRAMAVRFGQEEAKVV. Ser-145 contributes to the substrate binding site. The active-site Proton acceptor is the Tyr-158.

Belongs to the short-chain dehydrogenases/reductases (SDR) family. As to quaternary structure, homotetramer.

It carries out the reaction D-glucose + NAD(+) = D-glucono-1,5-lactone + NADH + H(+). It catalyses the reaction D-glucose + NADP(+) = D-glucono-1,5-lactone + NADPH + H(+). The protein is Glucose 1-dehydrogenase 4 (gdhIV) of Priestia megaterium (Bacillus megaterium).